Consider the following 609-residue polypeptide: Aspartate--tRNA(Asp/Asn) ligase (609 aa).

Glu177 is a binding site for L-aspartate. An aspartate region spans residues 201 to 204 (QLFK). Residue Arg223 participates in L-aspartate binding. ATP contacts are provided by residues 223–225 (RDE) and Gln232. His461 provides a ligand contact to L-aspartate. Residue Glu499 participates in ATP binding. Position 506 (Arg506) interacts with L-aspartate. 551–554 (GVDR) lines the ATP pocket.

The protein belongs to the class-II aminoacyl-tRNA synthetase family. Type 1 subfamily. Homodimer.

It localises to the cytoplasm. It catalyses the reaction tRNA(Asx) + L-aspartate + ATP = L-aspartyl-tRNA(Asx) + AMP + diphosphate. Its function is as follows. Aspartyl-tRNA synthetase with relaxed tRNA specificity since it is able to aspartylate not only its cognate tRNA(Asp) but also tRNA(Asn). Reaction proceeds in two steps: L-aspartate is first activated by ATP to form Asp-AMP and then transferred to the acceptor end of tRNA(Asp/Asn). In Synechococcus sp. (strain CC9605), this protein is Aspartate--tRNA(Asp/Asn) ligase.